Here is a 219-residue protein sequence, read N- to C-terminus: Uracil-DNA glycosylase (219 aa).

Aspartate 64 serves as the catalytic Proton acceptor.

It belongs to the uracil-DNA glycosylase (UDG) superfamily. UNG family.

The protein resides in the cytoplasm. It carries out the reaction Hydrolyzes single-stranded DNA or mismatched double-stranded DNA and polynucleotides, releasing free uracil.. Functionally, excises uracil residues from the DNA which can arise as a result of misincorporation of dUMP residues by DNA polymerase or due to deamination of cytosine. The protein is Uracil-DNA glycosylase of Leuconostoc citreum (strain KM20).